The following is a 97-amino-acid chain: uncharacterized protein (97 aa).

The next 3 helical transmembrane spans lie at Cys7–Gly27, Ile34–Ser54, and Ile69–Leu89.

Its subcellular location is the cell membrane. This is an uncharacterized protein from Haemophilus influenzae (strain ATCC 51907 / DSM 11121 / KW20 / Rd).